Here is a 226-residue protein sequence, read N- to C-terminus: Adenylate kinase (226 aa).

Residue 11–16 (GSGKGT) participates in ATP binding. Residues 31-64 (SAGEILKHALSVTKFHFNFNTDNMLNQINSGNLV) are NMP. AMP contacts are provided by residues 62–64 (NLV), 90–93 (GFPR), and Gln-97. The tract at residues 127–164 (GRQVHIKSGRTYHIKFNPPKLDGIDDITGEKLVIRADD) is LID. Residues Arg-128 and 137–138 (TY) contribute to the ATP site. AMP is bound by residues Arg-161 and Arg-172. Residue Gln-205 coordinates ATP.

This sequence belongs to the adenylate kinase family. Monomer.

The protein resides in the cytoplasm. The enzyme catalyses AMP + ATP = 2 ADP. It participates in purine metabolism; AMP biosynthesis via salvage pathway; AMP from ADP: step 1/1. In terms of biological role, catalyzes the reversible transfer of the terminal phosphate group between ATP and AMP. Plays an important role in cellular energy homeostasis and in adenine nucleotide metabolism. The sequence is that of Adenylate kinase from Blochmanniella floridana.